The chain runs to 339 residues: Protein H339R (339 aa).

Belongs to the asfivirus H339R family. As to quaternary structure, interacts with host NACA (alpha chain of nascent polypeptide-associated complex).

It localises to the host cytoplasm. It is found in the host nucleus. The chain is Protein H339R from African swine fever virus (isolate Tick/South Africa/Pretoriuskop Pr4/1996) (ASFV).